The chain runs to 127 residues: uncharacterized protein (127 aa).

The span at 1–13 shows a compositional bias: polar residues; that stretch reads MEAGNRSGTPQHR. A disordered region spans residues 1–26; sequence MEAGNRSGTPQHRQLSEIRQDLSSSP.

This is an uncharacterized protein from Saccharomyces cerevisiae (strain ATCC 204508 / S288c) (Baker's yeast).